Reading from the N-terminus, the 644-residue chain is Fructose-1,6-bisphosphatase class 3 (644 aa).

It belongs to the FBPase class 3 family. Requires Mn(2+) as cofactor.

The catalysed reaction is beta-D-fructose 1,6-bisphosphate + H2O = beta-D-fructose 6-phosphate + phosphate. Its pathway is carbohydrate biosynthesis; gluconeogenesis. This chain is Fructose-1,6-bisphosphatase class 3, found in Oceanobacillus iheyensis (strain DSM 14371 / CIP 107618 / JCM 11309 / KCTC 3954 / HTE831).